The chain runs to 447 residues: Na(+)-translocating NADH-quinone reductase subunit A (447 aa).

It belongs to the NqrA family. Composed of six subunits; NqrA, NqrB, NqrC, NqrD, NqrE and NqrF.

The catalysed reaction is a ubiquinone + n Na(+)(in) + NADH + H(+) = a ubiquinol + n Na(+)(out) + NAD(+). NQR complex catalyzes the reduction of ubiquinone-1 to ubiquinol by two successive reactions, coupled with the transport of Na(+) ions from the cytoplasm to the periplasm. NqrA to NqrE are probably involved in the second step, the conversion of ubisemiquinone to ubiquinol. The sequence is that of Na(+)-translocating NADH-quinone reductase subunit A from Neisseria meningitidis serogroup C / serotype 2a (strain ATCC 700532 / DSM 15464 / FAM18).